We begin with the raw amino-acid sequence, 151 residues long: D-aminoacyl-tRNA deacylase (151 aa).

The short motif at 136–137 is the Gly-cisPro motif, important for rejection of L-amino acids element; that stretch reads GP.

Belongs to the DTD family. Homodimer.

Its subcellular location is the cytoplasm. The enzyme catalyses glycyl-tRNA(Ala) + H2O = tRNA(Ala) + glycine + H(+). The catalysed reaction is a D-aminoacyl-tRNA + H2O = a tRNA + a D-alpha-amino acid + H(+). In terms of biological role, an aminoacyl-tRNA editing enzyme that deacylates mischarged D-aminoacyl-tRNAs. Also deacylates mischarged glycyl-tRNA(Ala), protecting cells against glycine mischarging by AlaRS. Acts via tRNA-based rather than protein-based catalysis; rejects L-amino acids rather than detecting D-amino acids in the active site. By recycling D-aminoacyl-tRNA to D-amino acids and free tRNA molecules, this enzyme counteracts the toxicity associated with the formation of D-aminoacyl-tRNA entities in vivo and helps enforce protein L-homochirality. This Lactococcus lactis subsp. cremoris (strain MG1363) protein is D-aminoacyl-tRNA deacylase.